The sequence spans 440 residues: Chaperone SurA (440 aa).

A signal peptide spans 1–25; it reads MGTKLSSRSPFSLPFLTLLAGMAIA. PpiC domains follow at residues 182–283 and 294–392; these read SDEY…KLVE and IDQT…QVIE.

It localises to the periplasm. The enzyme catalyses [protein]-peptidylproline (omega=180) = [protein]-peptidylproline (omega=0). In terms of biological role, chaperone involved in the correct folding and assembly of outer membrane proteins. Recognizes specific patterns of aromatic residues and the orientation of their side chains, which are found more frequently in integral outer membrane proteins. May act in both early periplasmic and late outer membrane-associated steps of protein maturation. The protein is Chaperone SurA of Nitrosospira multiformis (strain ATCC 25196 / NCIMB 11849 / C 71).